A 271-amino-acid chain; its full sequence is Neurexophilin-1 (271 aa).

The N-terminal stretch at 1-21 (MQAACWYVLLLLQPTVYLVTC) is a signal peptide. The II stretch occupies residues 22-97 (ANLTNGGKSE…WDWLRNSTDL (76 aa)). 6 N-linked (GlcNAc...) asparagine glycosylation sites follow: Asn-23, Asn-68, Asn-93, Asn-146, Asn-156, and Asn-162. Residues 98–176 (QEPRPRAKRR…LVPPTKIVEF (79 aa)) are III. Positions 177-185 (DLAQQTVID) are IV (linker domain). Residues 186-271 (AKDSKSFNCR…HSDTPYFPSG (86 aa)) form a v (Cys-rich) region.

It belongs to the neurexophilin family. Post-translationally, may be proteolytically processed at the boundary between the N-terminal non-conserved and the central conserved domain in neuron-like cells. In terms of tissue distribution, highest level in brain.

It localises to the secreted. May be signaling molecules that resemble neuropeptides. Ligand for alpha-neurexins. This chain is Neurexophilin-1 (Nxph1), found in Rattus norvegicus (Rat).